The chain runs to 241 residues: MGTSPFVLPFAALEVGQHLYWQIGKLRIHGQVFMTSWILIGALLTLVVVGTKKMERDPKGVQNLLEFLWDYIRDLARTQIGEKVYRDWMPFIGTLFLFIFVSNWGGALIPWKLIELPSGELGAPTADINTTVALALLVSLSYFYAGLSNKGLRYFEYYVHPTPIMLPFKIVEDFTKPLSLSFRLFGNILADELVVAVLVFLVPLVLPVPVMFLGLFTSAIQALIFATLAAYYIGEAVEEHH.

A run of 5 helical transmembrane segments spans residues Gly30–Gly50, Phe91–Trp111, Ile128–Ser148, Leu193–Leu213, and Gly214–Gly234.

Belongs to the ATPase A chain family. As to quaternary structure, F-type ATPases have 2 components, CF(1) - the catalytic core - and CF(0) - the membrane proton channel. CF(1) has five subunits: alpha(3), beta(3), gamma(1), delta(1), epsilon(1). CF(0) has four main subunits: a, b, b' and c.

It is found in the cellular thylakoid membrane. Key component of the proton channel; it plays a direct role in the translocation of protons across the membrane. This Prochlorococcus marinus (strain SARG / CCMP1375 / SS120) protein is ATP synthase subunit a.